The primary structure comprises 751 residues: Serine/threonine-protein kinase B-raf (751 aa).

The segment covering 1-32 has biased composition (gly residues); the sequence is MAALSGGGGSSSGGGGGGGGGGGGGDGGGGAE. A disordered region spans residues 1–55; that stretch reads MAALSGGGGSSSGGGGGGGGGGGGGDGGGGAEQGQALFNGDMEPEAGAGAAASSA. Alanine 2 bears the N-acetylalanine mark. Residues 46-55 show a composition bias toward low complexity; it reads AGAGAAASSA. Position 135 is a phosphoserine (serine 135). The RBD domain maps to 139–211; sequence PIVRVFLPNK…TGEELHVEVL (73 aa). Zn(2+) contacts are provided by histidine 219, cysteine 232, cysteine 235, cysteine 245, cysteine 248, histidine 253, cysteine 256, and cysteine 264. The segment at 288 to 440 is disordered; the sequence is EASFPETALP…SSDDWEIPDG (153 aa). Over residues 297–324 the composition is skewed to low complexity; it reads PSGSSSAPPSDSTGPQILTSPSPSKSIP. Serine 316 carries the post-translational modification Phosphoserine. The span at 331–346 shows a compositional bias: basic and acidic residues; sequence PADEDHRNQFGQRDRS. The residue at position 348 (serine 348) is a Phosphoserine. A Phosphothreonine; by autocatalysis modification is found at threonine 356. Residue threonine 379 is modified to Phosphothreonine. Serine 382 is subject to Phosphoserine. A Phosphothreonine modification is found at threonine 384. The segment covering 406-432 has biased composition (basic and acidic residues); sequence QRERKSSSSSSSEDRSRMKTLGRRDSS. A phosphoserine mark is found at serine 431 and serine 432. The Protein kinase domain maps to 442-702; that stretch reads ITVGQRIGSG…PQILASIELL (261 aa). ATP contacts are provided by residues 448–456 and lysine 468; that span reads IGSGSFGTV. Aspartate 561 (proton acceptor) is an active-site residue. A Glycyl lysine isopeptide (Lys-Gly) (interchain with G-Cter in ubiquitin) cross-link involves residue lysine 563. Residue arginine 656 is modified to Omega-N-methylarginine; by PRMT5. 2 positions are modified to phosphoserine: serine 714 and serine 735. Threonine 738 is modified (phosphothreonine; by MAPK1).

The protein belongs to the protein kinase superfamily. TKL Ser/Thr protein kinase family. RAF subfamily. As to quaternary structure, monomer. Homodimer. Heterodimerizes with RAF1, and the heterodimer possesses a highly increased kinase activity compared to the respective homodimers or monomers. Heterodimerization is mitogen-regulated and enhanced by 14-3-3 proteins. MAPK1/ERK2 activation can induce a negative feedback that promotes the dissociation of the heterodimer by phosphorylating BRAF at Thr-738. Heterodimerizes (via N-terminus) with KSR1 (via N-terminus) or KSR2 (via N-terminus) in a MAP2K1-dependent manner. Interacts with MAP2K1 and MAP2K2. Found in a complex with at least BRAF, HRAS, MAP2K1, MAPK3 and RGS14. Interacts with RIT1. Interacts (via N-terminus) with RGS14 (via RBD domains); the interaction mediates the formation of a ternary complex with RAF1, a ternary complex inhibited by GNAI1. Interacts with DGKH. Interacts with PRMT5. Interacts with AKAP13, MAP2K1 and KSR1. Identified in a complex with AKAP13, KSR1 and MAP2K1. Interacts with FNIP1 and FNIP2. Requires Zn(2+) as cofactor. In terms of processing, phosphorylation at Ser-348 by SGK1 inhibits its activity. Dephosphorylation of Ser-348 by the SHOC2-MRAS-PP1c (SMP) complex consisting of SHOC2, GTP-bound M-Ras/MRAS and the catalytic subunit of protein phosphatase 1 (PPP1CA, PPP1CB or PPP1CC); this relieves inactivation and stimulates kinase activity. Methylation by PRMT5 decreases stability and kinase activity. Post-translationally, ubiquitinated by RNF149; which leads to proteasomal degradation. Polyubiquitinated at Lys-615 in response to EGF.

The protein localises to the nucleus. It localises to the cytoplasm. It is found in the cell membrane. It carries out the reaction L-seryl-[protein] + ATP = O-phospho-L-seryl-[protein] + ADP + H(+). The catalysed reaction is L-threonyl-[protein] + ATP = O-phospho-L-threonyl-[protein] + ADP + H(+). In quiescent cells, maintained in an inactive state via an intramolecular interaction between the protein kinase and N-terminal domains. Following mitogen-mediated cell activation, binds via its RGB domain to active HRAS (GTP-bound) which releases the inhibitory intramolecular interaction between the two domains. This allows the MAP2K1-mediated dimerization of KSR1 or KSR2, and BRAF which activates BRAF. Involved in the transduction of mitogenic signals from the cell membrane to the nucleus. Phosphorylates MAP2K1, and thereby activates the MAP kinase signal transduction pathway. Phosphorylates PFKFB2. May play a role in the postsynaptic responses of hippocampal neurons. This Mus musculus (Mouse) protein is Serine/threonine-protein kinase B-raf.